The primary structure comprises 176 residues: Late embryogenesis abundant protein 49 (176 aa).

2 consecutive SMP domains span residues 49–106 (TTLT…RNQK) and 115–171 (NLGD…KLNH).

The protein belongs to the LEA type SMP family.

It localises to the cytoplasm. Its subcellular location is the nucleus. Its function is as follows. LEA proteins are late embryonic proteins abundant in higher plant seed embryos. The function of those proteins is not known. This Arabidopsis thaliana (Mouse-ear cress) protein is Late embryogenesis abundant protein 49.